We begin with the raw amino-acid sequence, 177 residues long: N5-carboxyaminoimidazole ribonucleotide mutase (177 aa).

3 residues coordinate substrate: S18, D21, and R48.

This sequence belongs to the AIR carboxylase family. Class I subfamily.

It carries out the reaction 5-carboxyamino-1-(5-phospho-D-ribosyl)imidazole + H(+) = 5-amino-1-(5-phospho-D-ribosyl)imidazole-4-carboxylate. It functions in the pathway purine metabolism; IMP biosynthesis via de novo pathway; 5-amino-1-(5-phospho-D-ribosyl)imidazole-4-carboxylate from 5-amino-1-(5-phospho-D-ribosyl)imidazole (N5-CAIR route): step 2/2. Its function is as follows. Catalyzes the conversion of N5-carboxyaminoimidazole ribonucleotide (N5-CAIR) to 4-carboxy-5-aminoimidazole ribonucleotide (CAIR). The protein is N5-carboxyaminoimidazole ribonucleotide mutase of Pyrococcus horikoshii (strain ATCC 700860 / DSM 12428 / JCM 9974 / NBRC 100139 / OT-3).